Here is an 86-residue protein sequence, read N- to C-terminus: Small ribosomal subunit protein bS16 (86 aa).

This sequence belongs to the bacterial ribosomal protein bS16 family.

This Borreliella afzelii (strain PKo) (Borrelia afzelii) protein is Small ribosomal subunit protein bS16.